Here is a 230-residue protein sequence, read N- to C-terminus: MRVSSAIFTIASGIAAVSAADCAAAGDYDSQGRYSCNPAHQYPNGQSCKTIDGCPLLADASGQPIYKSTCAAPGDYDDKGRYSCNPAHQYPNGQSCKTVEGCPLLVDANGQPIVKATGTSTGTGTVTVTSSAAAQPTSTGTPSSKCAAPGDYDSKGRYSCNPAHQYPNGQTCKVIDNCPLLCDASGKPIVKATGTGSGNNGKPTDLPIVGAGSVLTGGMAMVAAAVVAAI.

The first 19 residues, 1-19 (MRVSSAIFTIASGIAAVSA), serve as a signal peptide directing secretion.

The protein resides in the vacuole. Functionally, vacuolar protein required for aerial conidiation and conidial maturation. Also involved in blastospore production and cell cycle. Plays a vital role in the secretion of Pr1 proteases for cuticular penetration and hence contributes significantly to host infection and virulence. The chain is Vacuole-localized protein 4 from Beauveria bassiana (strain ARSEF 2860) (White muscardine disease fungus).